The chain runs to 506 residues: MSISIRPDEISSIIQQQIEQYDQEVKVANVGTVLQVGDGIARIYGLEKAMAGELLEFEDGTIGIAQNLEEDNVGAVLMGEGLEIQEGSSVTATGRIAQIPVGEALIGRVVDALGRPIDGKGDIKSSESRLIESPAPGIIARRSVHEPMQTGITAIDSMIPIGRGQRELIIGDRQTGKTAIAIDTIINQKEEDVICVYVAIGQKASTVANVVQTLQEKGAMDYTIVVAASASEPATLQYLAPYTGATIAEYFMYKGKATLVIYDDLSKQAQAYRQMSLLLRRPPGREAYPGDVFYIHSRLLERAAKLSDELGKGSMTALPIIETQAGDVSAYIPTNVISITDGQIFLSSDLFNAGIRPAVNPGISVSRVGSAAQTKAMKKVAGKIKLELAQFDDLQAFAQFASDLDKATQDQLARGQRLRELLKQPQNSPLSVYEQVAILYAGINGYLDDVPVDKVTSFTQGLREYLKTGKTQYAEGVRTSKALGDAEEAALKEALTEYKKTFKAAA.

171-178 contacts ATP; the sequence is GDRQTGKT.

Belongs to the ATPase alpha/beta chains family. F-type ATPases have 2 components, CF(1) - the catalytic core - and CF(0) - the membrane proton channel. CF(1) has five subunits: alpha(3), beta(3), gamma(1), delta(1), epsilon(1). CF(0) has four main subunits: a, b, b' and c.

The protein resides in the cellular thylakoid membrane. It carries out the reaction ATP + H2O + 4 H(+)(in) = ADP + phosphate + 5 H(+)(out). In terms of biological role, produces ATP from ADP in the presence of a proton gradient across the membrane. The alpha chain is a regulatory subunit. The chain is ATP synthase subunit alpha from Nostoc punctiforme (strain ATCC 29133 / PCC 73102).